A 523-amino-acid chain; its full sequence is MSNRVIIFDTTLRDGEQALAASLTVKEKLQIALALERLGVDVMEVGFPVSSPGDFESVQTIAKTIKNSRVCALSRALESDIDAAAQALSVAEQFRIHTFISTSTIHVENKLKRSFDQVLDMAVGAVKYARRFTDDVEFSCEDAGRTPIDNLCRMVEEAIKAGARTINIPDTVGYTVPSEFGGIIQTLFNRVPNIDQAVISVHCHDDLGLSVANSITAVQHGARQIECTVNGIGERAGNCSLEEIAMILSTRKGELGLETGINAKEIHRTSSLVSQLCNMPVQANKAIVGANAFTHSSGIHQDGMLKAQNTYEIMTPESIGLNRNNLNMTSRSGRHVIKHRMSELGYGEQDYDMDVLYEEFLALADKKGQVFDYDLEALAFMEAQAEDDDHFELQQLVVHSDSTEGSATATVKVAVNGETITEAATGNGPVDAAYKAVARASGCKTNITSYQLSAKGEGHNALGQVDITAKYREQNFHGVGLATDVVEASAKALIHVMNLTWRADKVADCKQRIQQNKQEFGSV.

Residues 5 to 267 (VIIFDTTLRD…ETGINAKEIH (263 aa)) enclose the Pyruvate carboxyltransferase domain. Mn(2+) is bound by residues Asp14, His202, His204, and Asn238. Residues 392–523 (ELQQLVVHSD…QQNKQEFGSV (132 aa)) are regulatory domain.

It belongs to the alpha-IPM synthase/homocitrate synthase family. LeuA type 1 subfamily. In terms of assembly, homodimer. Mn(2+) serves as cofactor.

It is found in the cytoplasm. The enzyme catalyses 3-methyl-2-oxobutanoate + acetyl-CoA + H2O = (2S)-2-isopropylmalate + CoA + H(+). Its pathway is amino-acid biosynthesis; L-leucine biosynthesis; L-leucine from 3-methyl-2-oxobutanoate: step 1/4. Functionally, catalyzes the condensation of the acetyl group of acetyl-CoA with 3-methyl-2-oxobutanoate (2-ketoisovalerate) to form 3-carboxy-3-hydroxy-4-methylpentanoate (2-isopropylmalate). The sequence is that of 2-isopropylmalate synthase from Shewanella halifaxensis (strain HAW-EB4).